Here is a 180-residue protein sequence, read N- to C-terminus: Large ribosomal subunit protein uL6 (180 aa).

The protein belongs to the universal ribosomal protein uL6 family. As to quaternary structure, part of the 50S ribosomal subunit.

This protein binds to the 23S rRNA, and is important in its secondary structure. It is located near the subunit interface in the base of the L7/L12 stalk, and near the tRNA binding site of the peptidyltransferase center. This Anaeromyxobacter dehalogenans (strain 2CP-C) protein is Large ribosomal subunit protein uL6.